Here is a 406-residue protein sequence, read N- to C-terminus: Putative nickel insertion protein (406 aa).

Belongs to the LarC family.

The chain is Putative nickel insertion protein from Methanosphaera stadtmanae (strain ATCC 43021 / DSM 3091 / JCM 11832 / MCB-3).